We begin with the raw amino-acid sequence, 212 residues long: Thymidylate kinase (212 aa).

10–17 is an ATP binding site; sequence GLEGAGKT.

Belongs to the thymidylate kinase family.

The catalysed reaction is dTMP + ATP = dTDP + ADP. Phosphorylation of dTMP to form dTDP in both de novo and salvage pathways of dTTP synthesis. In Yersinia enterocolitica serotype O:8 / biotype 1B (strain NCTC 13174 / 8081), this protein is Thymidylate kinase.